Here is a 125-residue protein sequence, read N- to C-terminus: Fluoride-specific ion channel FluC (125 aa).

A run of 4 helical transmembrane segments spans residues 4–24 (VIYV…VGIV), 32–52 (FLPW…GLFA), 68–88 (LLIT…LDTV), and 100–120 (AFYV…GLAV). Residues glycine 75 and threonine 78 each coordinate Na(+).

Belongs to the fluoride channel Fluc/FEX (TC 1.A.43) family.

The protein resides in the cell inner membrane. The catalysed reaction is fluoride(in) = fluoride(out). Na(+) is not transported, but it plays an essential structural role and its presence is essential for fluoride channel function. Functionally, fluoride-specific ion channel. Important for reducing fluoride concentration in the cell, thus reducing its toxicity. The protein is Fluoride-specific ion channel FluC of Allorhizobium ampelinum (strain ATCC BAA-846 / DSM 112012 / S4) (Agrobacterium vitis (strain S4)).